The sequence spans 495 residues: Amidophosphoribosyltransferase (495 aa).

Residues 1–22 are disordered; the sequence is MFPPSSDLTELNDGQPLSGHHA. A propeptide spanning residues 1 to 28 is cleaved from the precursor; that stretch reads MFPPSSDLTELNDGQPLSGHHADKPEEA. Residue C29 is the Nucleophile of the active site. The Glutamine amidotransferase type-2 domain occupies 29–254; it reads CGVFGIYAPE…AGELVHITES (226 aa). C270 provides a ligand contact to [4Fe-4S] cluster. Mg(2+) is bound by residues S317, D379, and D380. 3 residues coordinate [4Fe-4S] cluster: C416, C467, and C470.

It in the C-terminal section; belongs to the purine/pyrimidine phosphoribosyltransferase family. It depends on Mg(2+) as a cofactor. [4Fe-4S] cluster is required as a cofactor.

It carries out the reaction 5-phospho-beta-D-ribosylamine + L-glutamate + diphosphate = 5-phospho-alpha-D-ribose 1-diphosphate + L-glutamine + H2O. The protein operates within purine metabolism; IMP biosynthesis via de novo pathway; N(1)-(5-phospho-D-ribosyl)glycinamide from 5-phospho-alpha-D-ribose 1-diphosphate: step 1/2. In terms of biological role, catalyzes the formation of phosphoribosylamine from phosphoribosylpyrophosphate (PRPP) and glutamine. The protein is Amidophosphoribosyltransferase of Synechocystis sp. (strain ATCC 27184 / PCC 6803 / Kazusa).